The sequence spans 227 residues: PKHD-type hydroxylase Reut_B4660 (227 aa).

The Fe2OG dioxygenase domain occupies 78–178 (KVFPPLFNRY…RVSSFFWIQS (101 aa)). Fe cation is bound by residues histidine 96, aspartate 98, and histidine 159. 2-oxoglutarate is bound at residue arginine 169.

The cofactor is Fe(2+). Requires L-ascorbate as cofactor.

The protein is PKHD-type hydroxylase Reut_B4660 of Cupriavidus pinatubonensis (strain JMP 134 / LMG 1197) (Cupriavidus necator (strain JMP 134)).